The sequence spans 357 residues: Vomeronasal type-1 receptor 5 (357 aa).

The Extracellular segment spans residues 1–3; sequence MLK. Residues 4–24 traverse the membrane as a helical segment; that stretch reads LVIIENMAEIMLFSLDLLLFS. At 25–52 the chain is on the cytoplasmic side; it reads TDILCFNFPSKMIKLPGFITIQIFFYPQ. Residues 53–73 traverse the membrane as a helical segment; the sequence is ASFGISANTILFLFHIFTFVF. The Extracellular segment spans residues 74-81; that stretch reads SHRSKSID. A helical membrane pass occupies residues 82–102; that stretch reads MIISHLSLIHILLLFTQAILV. Topologically, residues 103–130 are cytoplasmic; it reads SLDFFGSQNTQDDLRCKVIVFLNKVMRG. A helical transmembrane segment spans residues 131–151; that stretch reads LSICTPCLLNVLQAIISPSIF. Topologically, residues 152–163 are extracellular; that stretch reads SLAKLKHPSASH. A helical membrane pass occupies residues 164 to 184; it reads ILGFFLFSWVLNMFIGVIFCC. The Cytoplasmic portion of the chain corresponds to 185-269; it reads TLWLPPVKWG…PVSPVKRASQ (85 aa). A helical transmembrane segment spans residues 270-290; it reads TILLLVSFVFIYWVDFMFSFS. Residues 291-300 lie on the Extracellular side of the membrane; it reads RGVTWINDSL. An N-linked (GlcNAc...) asparagine glycan is attached at asparagine 297. The helical transmembrane segment at 301–321 threads the bilayer; that stretch reads LVWFQVIVANSYATISPLMLI. Topologically, residues 322-357 are cytoplasmic; it reads YADNQIFKTLQMLWFKYLSPPKLMLKFNRQCGSTKK.

This sequence belongs to the G-protein coupled receptor 1 family.

The protein resides in the cell membrane. Functionally, putative pheromone receptor. The sequence is that of Vomeronasal type-1 receptor 5 (VN1R5) from Gorilla gorilla gorilla (Western lowland gorilla).